A 158-amino-acid polypeptide reads, in one-letter code: SsrA-binding protein (158 aa).

The span at 133–148 shows a compositional bias: basic and acidic residues; it reads KAQDKRETSAKRDWNR. The disordered stretch occupies residues 133 to 158; sequence KAQDKRETSAKRDWNRQKARLLKQNG. The span at 149 to 158 shows a compositional bias: basic residues; sequence QKARLLKQNG.

The protein belongs to the SmpB family.

Its subcellular location is the cytoplasm. Functionally, required for rescue of stalled ribosomes mediated by trans-translation. Binds to transfer-messenger RNA (tmRNA), required for stable association of tmRNA with ribosomes. tmRNA and SmpB together mimic tRNA shape, replacing the anticodon stem-loop with SmpB. tmRNA is encoded by the ssrA gene; the 2 termini fold to resemble tRNA(Ala) and it encodes a 'tag peptide', a short internal open reading frame. During trans-translation Ala-aminoacylated tmRNA acts like a tRNA, entering the A-site of stalled ribosomes, displacing the stalled mRNA. The ribosome then switches to translate the ORF on the tmRNA; the nascent peptide is terminated with the 'tag peptide' encoded by the tmRNA and targeted for degradation. The ribosome is freed to recommence translation, which seems to be the essential function of trans-translation. This chain is SsrA-binding protein, found in Jannaschia sp. (strain CCS1).